The primary structure comprises 437 residues: Enolase (437 aa).

Residue glutamine 166 participates in (2R)-2-phosphoglycerate binding. Catalysis depends on glutamate 208, which acts as the Proton donor. Positions 245, 295, and 322 each coordinate Mg(2+). 4 residues coordinate (2R)-2-phosphoglycerate: lysine 347, arginine 376, serine 377, and lysine 398. The Proton acceptor role is filled by lysine 347.

This sequence belongs to the enolase family. Mg(2+) serves as cofactor.

It is found in the cytoplasm. The protein resides in the secreted. The protein localises to the cell surface. It carries out the reaction (2R)-2-phosphoglycerate = phosphoenolpyruvate + H2O. It functions in the pathway carbohydrate degradation; glycolysis; pyruvate from D-glyceraldehyde 3-phosphate: step 4/5. Catalyzes the reversible conversion of 2-phosphoglycerate (2-PG) into phosphoenolpyruvate (PEP). It is essential for the degradation of carbohydrates via glycolysis. This is Enolase from Lachnoclostridium phytofermentans (strain ATCC 700394 / DSM 18823 / ISDg) (Clostridium phytofermentans).